The sequence spans 844 residues: Probable serine/threonine-protein kinase DDB_G0267566 (844 aa).

2 ANK repeats span residues 335–367 and 371–400; these read KGDTALHNTIKNLKKESGPMVAALLSCGANANI and KHKVPLHFAIEFGDESIIKILLAFGAKPFL. The 266-residue stretch at 508 to 773 folds into the Protein kinase domain; that stretch reads SELGKLIGKG…FEVFQKLKKV (266 aa). Residues 514 to 522 and Lys-539 each bind ATP; that span reads IGKGANGKV. Asp-634 serves as the catalytic Proton acceptor.

This sequence belongs to the protein kinase superfamily. Ser/Thr protein kinase family.

The enzyme catalyses L-seryl-[protein] + ATP = O-phospho-L-seryl-[protein] + ADP + H(+). It catalyses the reaction L-threonyl-[protein] + ATP = O-phospho-L-threonyl-[protein] + ADP + H(+). The chain is Probable serine/threonine-protein kinase DDB_G0267566 from Dictyostelium discoideum (Social amoeba).